A 226-amino-acid polypeptide reads, in one-letter code: 7-cyano-7-deazaguanine synthase (226 aa).

Leu-8–Leu-18 provides a ligand contact to ATP. Cys-188, Cys-198, Cys-201, and Cys-204 together coordinate Zn(2+).

Belongs to the QueC family. Zn(2+) is required as a cofactor.

It carries out the reaction 7-carboxy-7-deazaguanine + NH4(+) + ATP = 7-cyano-7-deazaguanine + ADP + phosphate + H2O + H(+). It participates in purine metabolism; 7-cyano-7-deazaguanine biosynthesis. In terms of biological role, catalyzes the ATP-dependent conversion of 7-carboxy-7-deazaguanine (CDG) to 7-cyano-7-deazaguanine (preQ(0)). The polypeptide is 7-cyano-7-deazaguanine synthase (Nitrosomonas eutropha (strain DSM 101675 / C91 / Nm57)).